A 293-amino-acid chain; its full sequence is Ribonuclease HIII (293 aa).

Positions 78-293 constitute an RNase H type-2 domain; sequence LPLIGTDEVG…TEKAKKRLER (216 aa). Asp-84, Glu-85, and Asp-187 together coordinate a divalent metal cation.

The protein belongs to the RNase HII family. RnhC subfamily. The cofactor is Mn(2+). Mg(2+) is required as a cofactor.

Its subcellular location is the cytoplasm. It carries out the reaction Endonucleolytic cleavage to 5'-phosphomonoester.. Its function is as follows. Endonuclease that specifically degrades the RNA of RNA-DNA hybrids. The sequence is that of Ribonuclease HIII from Streptococcus pneumoniae (strain JJA).